Here is a 71-residue protein sequence, read N- to C-terminus: uncharacterized protein (71 aa).

A helical membrane pass occupies residues 12–34; sequence GYLSLTLVTLPVCSSLHCYFLWT.

The protein resides in the membrane. This is an uncharacterized protein from Dictyostelium discoideum (Social amoeba).